The chain runs to 145 residues: 3-hydroxyacyl-[acyl-carrier-protein] dehydratase FabZ (145 aa).

His47 is a catalytic residue.

The protein belongs to the thioester dehydratase family. FabZ subfamily.

Its subcellular location is the cytoplasm. It catalyses the reaction a (3R)-hydroxyacyl-[ACP] = a (2E)-enoyl-[ACP] + H2O. Its function is as follows. Involved in unsaturated fatty acids biosynthesis. Catalyzes the dehydration of short chain beta-hydroxyacyl-ACPs and long chain saturated and unsaturated beta-hydroxyacyl-ACPs. In Acidovorax sp. (strain JS42), this protein is 3-hydroxyacyl-[acyl-carrier-protein] dehydratase FabZ.